Consider the following 246-residue polypeptide: Transcription factor A, mitochondrial (246 aa).

Residues 1-42 (MAFLRSMWGVLSALGRSGAAVCIGCGSRLRSPFSFVYLPKCF) constitute a mitochondrion transit peptide. A DNA-binding region (HMG box 1) is located at residues 50-118 (PKKPVSSYLR…VYKEKISRFK (69 aa)). Phosphoserine; by PKA occurs at positions 55, 56, and 61. T122 is subject to Phosphothreonine. The HMG box 2 DNA-binding region spans 155-219 (PKRPRSAYNV…RYHNEMKSWE (65 aa)). A Phosphoserine; by PKA modification is found at S160. Residues S193 and S195 each carry the phosphoserine modification.

In terms of assembly, monomer; binds DNA as a monomer. Homodimer. Component of the mitochondrial transcription initiation complex, composed at least of TFB2M, TFAM and POLRMT. In this complex TFAM recruits POLRMT to the promoter whereas TFB2M induces structural changes in POLRMT to enable promoter opening and trapping of the DNA non-template strand. Upon metabolic stress, forms a complex composed of FOXO3, SIRT3, TFAM and POLRMT. Interacts with TFB1M and TFB2M. Interacts with CLPX; this enhances DNA-binding. Post-translationally, phosphorylation by PKA within the HMG box 1 impairs DNA binding and promotes degradation by the AAA+ Lon protease.

It is found in the mitochondrion. It localises to the mitochondrion matrix. Its subcellular location is the mitochondrion nucleoid. In terms of biological role, binds to the mitochondrial light strand promoter and functions in mitochondrial transcription regulation. Component of the mitochondrial transcription initiation complex, composed at least of TFB2M, TFAM and POLRMT that is required for basal transcription of mitochondrial DNA. In this complex, TFAM recruits POLRMT to a specific promoter whereas TFB2M induces structural changes in POLRMT to enable promoter opening and trapping of the DNA non-template strand. Required for accurate and efficient promoter recognition by the mitochondrial RNA polymerase. Promotes transcription initiation from the HSP1 and the light strand promoter by binding immediately upstream of transcriptional start sites. Is able to unwind DNA. Bends the mitochondrial light strand promoter DNA into a U-turn shape via its HMG boxes. Required for maintenance of normal levels of mitochondrial DNA. May play a role in organizing and compacting mitochondrial DNA. The chain is Transcription factor A, mitochondrial from Trachypithecus cristatus (Silvered leaf-monkey).